The primary structure comprises 204 residues: GTP cyclohydrolase 1 (204 aa).

Residues C92, H95, and C165 each contribute to the Zn(2+) site.

Belongs to the GTP cyclohydrolase I family. In terms of assembly, homomer.

It carries out the reaction GTP + H2O = 7,8-dihydroneopterin 3'-triphosphate + formate + H(+). It functions in the pathway cofactor biosynthesis; 7,8-dihydroneopterin triphosphate biosynthesis; 7,8-dihydroneopterin triphosphate from GTP: step 1/1. This chain is GTP cyclohydrolase 1, found in Mycobacteroides abscessus (strain ATCC 19977 / DSM 44196 / CCUG 20993 / CIP 104536 / JCM 13569 / NCTC 13031 / TMC 1543 / L948) (Mycobacterium abscessus).